The sequence spans 153 residues: SKP1-like protein 9 (153 aa).

Residues 95 to 153 are interaction with the F-box domain of F-box proteins; the sequence is IKAANYLNIKSLFDLACQTVAEIIKGNTPEQIREFFNIENDLTPEEEAAIRRENKWAFE.

Belongs to the SKP1 family. In terms of assembly, part of a SCF (SKP1-cullin-F-box) protein ligase complex. Interacts with CPR1/CPR30 and At3g61590. Expressed in leaves, shoot apical meristem (SAM), roots, flowers and pollen.

The protein localises to the nucleus. The protein operates within protein modification; protein ubiquitination. In terms of biological role, involved in ubiquitination and subsequent proteasomal degradation of target proteins. Together with CUL1, RBX1 and a F-box protein, it forms a SCF E3 ubiquitin ligase complex. The functional specificity of this complex depends on the type of F-box protein. In the SCF complex, it serves as an adapter that links the F-box protein to CUL1. This chain is SKP1-like protein 9 (ASK9), found in Arabidopsis thaliana (Mouse-ear cress).